A 217-amino-acid chain; its full sequence is Glutathione S-transferase U20 (217 aa).

The GST N-terminal domain occupies 3–82; that stretch reads NLPILLDYWP…YVDEAWPEKN (80 aa). The glutathione site is built by serine 13, isoleucine 54, and serine 67. The 121-residue stretch at 88–208 folds into the GST C-terminal domain; the sequence is DPYGRAQARF…LPDSEKIVAY (121 aa).

This sequence belongs to the GST superfamily. Tau family. As to quaternary structure, homodimerization. Interacts with JAR1/FIN219 under continuous far red (cFR) light to stimulate JAR1/FIN219 activity and substrate selectivity. In terms of tissue distribution, mostly associated with vascular tissues, especially near hydathodes.

It is found in the nucleus. It localises to the cytoplasm. Its subcellular location is the cytosol. It carries out the reaction RX + glutathione = an S-substituted glutathione + a halide anion + H(+). Its activity is regulated as follows. Activated by JAR1/FIN219. Functionally, exhibits glutathione-dependent thiol transferase activities. Can use glutathione (GSH) and 1-chloro-2,4-dinitrobenzene (CDNB) as substrates. Involved in the regulation of far-red light influence on development. Regulator of the interplay between light and JA signaling by increasing JAR1/FIN219 efficiency. Maybe involved in gravitropic signal transduction. The polypeptide is Glutathione S-transferase U20 (Arabidopsis thaliana (Mouse-ear cress)).